We begin with the raw amino-acid sequence, 196 residues long: GTP cyclohydrolase-2 (196 aa).

Arginine 49–glutamate 53 contacts GTP. Positions 54, 65, and 67 each coordinate Zn(2+). Residues glutamine 70, glutamate 92–arginine 94, and threonine 114 each bind GTP. Residue aspartate 126 is the Proton acceptor of the active site. Arginine 128 serves as the catalytic Nucleophile. Residues threonine 149 and lysine 154 each contribute to the GTP site.

It belongs to the GTP cyclohydrolase II family. In terms of assembly, homodimer. It depends on Zn(2+) as a cofactor.

The enzyme catalyses GTP + 4 H2O = 2,5-diamino-6-hydroxy-4-(5-phosphoribosylamino)-pyrimidine + formate + 2 phosphate + 3 H(+). Its pathway is cofactor biosynthesis; riboflavin biosynthesis; 5-amino-6-(D-ribitylamino)uracil from GTP: step 1/4. Its function is as follows. Catalyzes the conversion of GTP to 2,5-diamino-6-ribosylamino-4(3H)-pyrimidinone 5'-phosphate (DARP), formate and pyrophosphate. In Shigella dysenteriae serotype 1 (strain Sd197), this protein is GTP cyclohydrolase-2.